Consider the following 1085-residue polypeptide: RecBCD enzyme subunit RecC (1085 aa).

The protein belongs to the RecC family. Heterotrimer of RecB, RecC and RecD. All subunits contribute to DNA-binding.

A helicase/nuclease that prepares dsDNA breaks (DSB) for recombinational DNA repair. Binds to DSBs and unwinds DNA via a highly rapid and processive ATP-dependent bidirectional helicase activity. Holoenzyme degrades any linearized DNA that is unable to undergo homologous recombination. In the holoenzyme this subunit recognizes the wild-type Chi sequence, and when added to isolated RecB increases its ATP-dependent helicase processivity. Unlike the case in E.coli, suppresses RecA-dependent homologous recombination, is instead required for single-strand annealing pathway repair of DSB. This chain is RecBCD enzyme subunit RecC, found in Mycolicibacterium smegmatis (strain ATCC 700084 / mc(2)155) (Mycobacterium smegmatis).